Here is a 190-residue protein sequence, read N- to C-terminus: Pyridoxal 5'-phosphate synthase subunit PdxT (190 aa).

G46–S48 is an L-glutamine binding site. C78 (nucleophile) is an active-site residue. L-glutamine-binding positions include R108 and I137–R138. Active-site charge relay system residues include H174 and E176.

Belongs to the glutaminase PdxT/SNO family. As to quaternary structure, in the presence of PdxS, forms a dodecamer of heterodimers. Only shows activity in the heterodimer.

The catalysed reaction is aldehydo-D-ribose 5-phosphate + D-glyceraldehyde 3-phosphate + L-glutamine = pyridoxal 5'-phosphate + L-glutamate + phosphate + 3 H2O + H(+). The enzyme catalyses L-glutamine + H2O = L-glutamate + NH4(+). It participates in cofactor biosynthesis; pyridoxal 5'-phosphate biosynthesis. Functionally, catalyzes the hydrolysis of glutamine to glutamate and ammonia as part of the biosynthesis of pyridoxal 5'-phosphate. The resulting ammonia molecule is channeled to the active site of PdxS. This chain is Pyridoxal 5'-phosphate synthase subunit PdxT, found in Chloroflexus aurantiacus (strain ATCC 29366 / DSM 635 / J-10-fl).